Here is a 100-residue protein sequence, read N- to C-terminus: Ubiquitin-related modifier 1 homolog (100 aa).

Glycine 100 carries the 1-thioglycine modification. A Glycyl lysine isopeptide (Gly-Lys) (interchain with K-? in acceptor proteins) cross-link involves residue glycine 100.

It belongs to the URM1 family. C-terminal thiocarboxylation occurs in 2 steps, it is first acyl-adenylated (-COAMP) via the hesA/moeB/thiF part of the MOCS3 homolog, then thiocarboxylated (-COSH) via the rhodanese domain of the MOCS3 homolog.

Its subcellular location is the cytoplasm. The protein operates within tRNA modification; 5-methoxycarbonylmethyl-2-thiouridine-tRNA biosynthesis. Acts as a sulfur carrier required for 2-thiolation of mcm(5)S(2)U at tRNA wobble positions of cytosolic tRNA(Lys), tRNA(Glu) and tRNA(Gln). Serves as sulfur donor in tRNA 2-thiolation reaction by being thiocarboxylated (-COSH) at its C-terminus by MOCS3. The sulfur is then transferred to tRNA to form 2-thiolation of mcm(5)S(2)U. Also acts as a ubiquitin-like protein (UBL) that is covalently conjugated via an isopeptide bond to lysine residues of target proteins. The thiocarboxylated form serves as substrate for conjugation and oxidative stress specifically induces the formation of UBL-protein conjugates. The sequence is that of Ubiquitin-related modifier 1 homolog from Oryza sativa subsp. japonica (Rice).